The following is a 557-amino-acid chain: CDP-diacylglycerol--glycerol-3-phosphate 3-phosphatidyltransferase, mitochondrial (557 aa).

The transit peptide at 1–25 (MAAAGGAALWRRLAAWLPRGPPGLA) directs the protein to the mitochondrion. Position 121–128 (121–128 (ASLYLGTG)) interacts with ATP. The PLD phosphodiesterase 1 domain maps to 212-238 (TIGLQHIKVYLFDDNVILSGANLSDLY). Active-site residues include histidine 217, lysine 219, and aspartate 224. A disordered region spans residues 322-346 (TFHSSQQGSSMLPQHDSEASEGLKP). Over residues 323–333 (FHSSQQGSSML) the composition is skewed to polar residues. The segment covering 336-346 (HDSEASEGLKP) has biased composition (basic and acidic residues). The PLD phosphodiesterase 2 domain maps to 461 to 494 (AGWTFHAKGLWLYLAGSSLPCLTLIGSPNFGYRS).

The protein belongs to the CDP-alcohol phosphatidyltransferase class-II family.

The protein resides in the mitochondrion. It carries out the reaction a CDP-1,2-diacyl-sn-glycerol + sn-glycerol 3-phosphate = a 1,2-diacyl-sn-glycero-3-phospho-(1'-sn-glycero-3'-phosphate) + CMP + H(+). The protein operates within phospholipid metabolism; phosphatidylglycerol biosynthesis; phosphatidylglycerol from CDP-diacylglycerol: step 1/2. Activated by calcium and magnesium and inhibited by other bivalent cations. Functions in the biosynthesis of the anionic phospholipids phosphatidylglycerol and cardiolipin. This chain is CDP-diacylglycerol--glycerol-3-phosphate 3-phosphatidyltransferase, mitochondrial (PGS1), found in Gallus gallus (Chicken).